The primary structure comprises 41 residues: uncharacterized protein (41 aa).

A helical transmembrane segment spans residues 8–28 (IKKIAMFFLGILVGVFIVLFF).

Its subcellular location is the membrane. This is an uncharacterized protein from Streptococcus pneumoniae serotype 2 (strain D39 / NCTC 7466).